A 329-amino-acid chain; its full sequence is DNA-directed RNA polymerase subunit alpha (329 aa).

The tract at residues 1 to 231 is alpha N-terminal domain (alpha-NTD); the sequence is MQNSLLKPKA…EQLAVFAQLE (231 aa). The interval 249-329 is alpha C-terminal domain (alpha-CTD); the sequence is FDPILLRPVD…SWPPAALEKR (81 aa).

Belongs to the RNA polymerase alpha chain family. As to quaternary structure, homodimer. The RNAP catalytic core consists of 2 alpha, 1 beta, 1 beta' and 1 omega subunit. When a sigma factor is associated with the core the holoenzyme is formed, which can initiate transcription.

It catalyses the reaction RNA(n) + a ribonucleoside 5'-triphosphate = RNA(n+1) + diphosphate. DNA-dependent RNA polymerase catalyzes the transcription of DNA into RNA using the four ribonucleoside triphosphates as substrates. The chain is DNA-directed RNA polymerase subunit alpha from Albidiferax ferrireducens (strain ATCC BAA-621 / DSM 15236 / T118) (Rhodoferax ferrireducens).